A 174-amino-acid chain; its full sequence is Large ribosomal subunit protein uL10 (174 aa).

It belongs to the universal ribosomal protein uL10 family. As to quaternary structure, part of the ribosomal stalk of the 50S ribosomal subunit. The N-terminus interacts with L11 and the large rRNA to form the base of the stalk. The C-terminus forms an elongated spine to which L12 dimers bind in a sequential fashion forming a multimeric L10(L12)X complex.

Forms part of the ribosomal stalk, playing a central role in the interaction of the ribosome with GTP-bound translation factors. The chain is Large ribosomal subunit protein uL10 from Methylobacillus flagellatus (strain ATCC 51484 / DSM 6875 / VKM B-1610 / KT).